A 940-amino-acid polypeptide reads, in one-letter code: Beta-mannosidase A (940 aa).

The first 21 residues, 1–21, serve as a signal peptide directing secretion; it reads MHFHGIATQAVLASNITTGSG. 7 N-linked (GlcNAc...) asparagine glycosylation sites follow: Asn-15, Asn-39, Asn-79, Asn-245, Asn-314, Asn-321, and Asn-344. Glu-476 (proton donor) is an active-site residue. Asn-534, Asn-605, Asn-626, Asn-653, Asn-733, Asn-761, and Asn-785 each carry an N-linked (GlcNAc...) asparagine glycan.

Belongs to the glycosyl hydrolase 2 family. Beta-mannosidase A subfamily. Homodimer.

It is found in the secreted. It catalyses the reaction Hydrolysis of terminal, non-reducing beta-D-mannose residues in beta-D-mannosides.. It participates in glycan metabolism; N-glycan degradation. Functionally, exoglycosidase that cleaves the single beta-linked mannose residue from the non-reducing end of beta-mannosidic oligosaccharides of various complexity and length. Involved in the degradation of polymeric mannan and galactomannan. The polypeptide is Beta-mannosidase A (mndA) (Emericella nidulans (strain FGSC A4 / ATCC 38163 / CBS 112.46 / NRRL 194 / M139) (Aspergillus nidulans)).